A 152-amino-acid polypeptide reads, in one-letter code: Small ribosomal subunit protein uS19x (152 aa).

This sequence belongs to the universal ribosomal protein uS19 family.

The protein resides in the cytoplasm. This Arabidopsis thaliana (Mouse-ear cress) protein is Small ribosomal subunit protein uS19x (RPS15D).